A 295-amino-acid polypeptide reads, in one-letter code: Ribosomal protein L11 methyltransferase (295 aa).

T146, G167, D189, and N231 together coordinate S-adenosyl-L-methionine.

This sequence belongs to the methyltransferase superfamily. PrmA family.

The protein resides in the cytoplasm. The catalysed reaction is L-lysyl-[protein] + 3 S-adenosyl-L-methionine = N(6),N(6),N(6)-trimethyl-L-lysyl-[protein] + 3 S-adenosyl-L-homocysteine + 3 H(+). Its function is as follows. Methylates ribosomal protein L11. The protein is Ribosomal protein L11 methyltransferase of Vibrio vulnificus (strain CMCP6).